Reading from the N-terminus, the 557-residue chain is Pectinesterase/pectinesterase inhibitor 18 (557 aa).

A signal peptide spans 1–34 (MSNSNQPLLSKPKSLKHKNLCLVLSFVAILGSVA). The interval 47 to 203 (NNDDSLLTTS…VSRARVALAI (157 aa)) is pectinesterase inhibitor 18. The pectinesterase 18 stretch occupies residues 246–543 (NVVVAKDGTG…FTVAKLIQGG (298 aa)). 2 residues coordinate substrate: T321 and Q351. D374 acts as the Proton donor; for pectinesterase activity in catalysis. Residue D395 is the Nucleophile; for pectinesterase activity of the active site. The substrate site is built by R463 and W465.

This sequence in the N-terminal section; belongs to the PMEI family. It in the C-terminal section; belongs to the pectinesterase family. Expressed in siliques, flowers, floral stems, rosette leaves and roots.

The protein localises to the secreted. It localises to the cell wall. It carries out the reaction [(1-&gt;4)-alpha-D-galacturonosyl methyl ester](n) + n H2O = [(1-&gt;4)-alpha-D-galacturonosyl](n) + n methanol + n H(+). The catalysed reaction is Endohydrolysis of the N-glycosidic bond at one specific adenosine on the 28S rRNA.. It participates in glycan metabolism; pectin degradation; 2-dehydro-3-deoxy-D-gluconate from pectin: step 1/5. In terms of biological role, acts in the modification of cell walls via demethylesterification of cell wall pectin. Inhibits the elongation phase of protein synthesis. In Arabidopsis thaliana (Mouse-ear cress), this protein is Pectinesterase/pectinesterase inhibitor 18 (PME18).